Consider the following 22-residue polypeptide: Ocellatin-LB1 (22 aa).

A Methionine amide modification is found at Met22.

As to expression, expressed by the skin glands.

It localises to the secreted. In terms of biological role, antibacterial peptide that inhibits Gram-negative bacteria A.actinomycetemcomitans ATCC 29522 (MIC=222.37 uM) and E.coli ATCC 25922 (MIC=114.04 uM). Also has antifungal activity against C.albicans ATCC 18804 (MIC=233.55 uM) and C.lusitaniae ATCC 56936 (MIC=233.55 uM). No activity against the Gram-positive bacterium S.aureus ATCC 25923. Shows virtually no hemolytic activity towards rabbit erythrocytes. This is Ocellatin-LB1 from Leptodactylus labyrinthicus (Labyrinth frog).